A 195-amino-acid chain; its full sequence is HTH-type transcriptional regulator BetI (195 aa).

Positions Ser8–Leu68 constitute an HTH tetR-type domain. Residues Thr31–Phe50 constitute a DNA-binding region (H-T-H motif).

The protein operates within amine and polyamine biosynthesis; betaine biosynthesis via choline pathway [regulation]. Its function is as follows. Repressor involved in the biosynthesis of the osmoprotectant glycine betaine. It represses transcription of the choline transporter BetT and the genes of BetAB involved in the synthesis of glycine betaine. This Escherichia coli O8 (strain IAI1) protein is HTH-type transcriptional regulator BetI.